A 414-amino-acid polypeptide reads, in one-letter code: Schlafen-like protein 1 (414 aa).

Residues 141-203 form a disordered region; sequence LHHREQDDSG…ISQNRPSGVR (63 aa). Pro residues predominate over residues 154–185; it reads SHSPGPSPGPSPGPSPGFRRPPLPQLADPPPN. 268–275 lines the ATP pocket; that stretch reads GVEDSGLV. Residues 373–407 are a coiled coil; that stretch reads RQKWTAELSKLEEKVDVLTLEKEQLQEQLRQRQTL.

It belongs to the Schlafen family. Subgroup I subfamily.

This Rattus norvegicus (Rat) protein is Schlafen-like protein 1 (Slfnl1).